A 421-amino-acid chain; its full sequence is UDP-N-acetylglucosamine 1-carboxyvinyltransferase (421 aa).

Residue 22 to 23 participates in phosphoenolpyruvate binding; sequence KN. A UDP-N-acetyl-alpha-D-glucosamine-binding site is contributed by arginine 93. Catalysis depends on cysteine 117, which acts as the Proton donor. Cysteine 117 is modified (2-(S-cysteinyl)pyruvic acid O-phosphothioketal). Residues 122 to 126, aspartate 308, and isoleucine 330 contribute to the UDP-N-acetyl-alpha-D-glucosamine site; that span reads RPVDL.

The protein belongs to the EPSP synthase family. MurA subfamily.

It is found in the cytoplasm. The catalysed reaction is phosphoenolpyruvate + UDP-N-acetyl-alpha-D-glucosamine = UDP-N-acetyl-3-O-(1-carboxyvinyl)-alpha-D-glucosamine + phosphate. The protein operates within cell wall biogenesis; peptidoglycan biosynthesis. Cell wall formation. Adds enolpyruvyl to UDP-N-acetylglucosamine. This chain is UDP-N-acetylglucosamine 1-carboxyvinyltransferase, found in Pseudomonas fluorescens (strain ATCC BAA-477 / NRRL B-23932 / Pf-5).